We begin with the raw amino-acid sequence, 103 residues long: NADH-quinone oxidoreductase subunit K (103 aa).

3 helical membrane passes run 6 to 26 (IEYY…GFLL), 30 to 50 (LLVL…TLVA), and 66 to 86 (FFVI…VLAF).

Belongs to the complex I subunit 4L family. NDH-1 is composed of 14 different subunits. Subunits NuoA, H, J, K, L, M, N constitute the membrane sector of the complex.

It localises to the cell inner membrane. The enzyme catalyses a quinone + NADH + 5 H(+)(in) = a quinol + NAD(+) + 4 H(+)(out). Functionally, NDH-1 shuttles electrons from NADH, via FMN and iron-sulfur (Fe-S) centers, to quinones in the respiratory chain. The immediate electron acceptor for the enzyme in this species is believed to be ubiquinone. Couples the redox reaction to proton translocation (for every two electrons transferred, four hydrogen ions are translocated across the cytoplasmic membrane), and thus conserves the redox energy in a proton gradient. The protein is NADH-quinone oxidoreductase subunit K of Sorangium cellulosum (strain So ce56) (Polyangium cellulosum (strain So ce56)).